The chain runs to 649 residues: Protein PSK SIMULATOR 3 (649 aa).

Residue Gly2 is the site of N-myristoyl glycine attachment. The disordered stretch occupies residues 18-43 (SGSSVADDGREPDFGHSQPNGQTSLI).

It localises to the nucleus. In terms of biological role, promotes plant growth, especially at the vegetative stage, probably via the regulation of phytosulfokine (PSK) signaling; PSK are peptide phytohormones acting as growth factors. Together with PSI2 and PSI3, required during vegetative growth and reproduction. May also have a function in carbohydrate metabolism. The polypeptide is Protein PSK SIMULATOR 3 (Arabidopsis thaliana (Mouse-ear cress)).